A 344-amino-acid polypeptide reads, in one-letter code: Golgi-associated RAB2 interactor protein 1B (344 aa).

This sequence belongs to the GARIN family.

It is found in the golgi apparatus. In terms of biological role, RAB2B effector protein required for accurate acrosome formation and normal male fertility. In complex with RAB2A/RAB2B, seems to suppress excessive vesicle trafficking during acrosome formation. The chain is Golgi-associated RAB2 interactor protein 1B (Garin1b) from Rattus norvegicus (Rat).